The chain runs to 1303 residues: Protein STU1 (1303 aa).

Disordered regions lie at residues Arg239–Val259, Ser531–Ser664, and Glu953–His977. Positions Arg249 to Val259 are enriched in polar residues. Positions Ser554–Gln568 are enriched in basic and acidic residues. Polar residues predominate over residues Ser573–Ile583. Residues Ser596–His609 are compositionally biased toward basic and acidic residues. A compositionally biased stretch (polar residues) spans Ser618–Pro629. Over residues Lys634–Pro648 the composition is skewed to basic and acidic residues. Polar residues-rich tracts occupy residues Arg653–Ser664 and Ser955–Arg972.

This sequence belongs to the CLASP family. In terms of assembly, interacts with microtubules.

Its subcellular location is the cytoplasm. It localises to the cytoskeleton. It is found in the nucleus. The protein localises to the spindle. In terms of biological role, microtubule binding protein that promotes the stabilization of dynamic microtubules. Required for mitotic spindle formation. The chain is Protein STU1 (STU1) from Candida albicans (strain SC5314 / ATCC MYA-2876) (Yeast).